Reading from the N-terminus, the 74-residue chain is MRRSIDYFTEPSCLSSGIVDILNKGFLSNKSKSHTQTHKKTAVQLFRNLELSTTKNVMEMWGKQDILRFLCFSE.

This is an uncharacterized protein from Schizosaccharomyces pombe (strain 972 / ATCC 24843) (Fission yeast).